Here is a 381-residue protein sequence, read N- to C-terminus: E3 ubiquitin-protein ligase ATL15 (381 aa).

Residues 1-23 form the signal peptide; that stretch reads MVVMSRVSFYSSFLLLLLEVVVA. Residues 40 to 60 form a helical membrane-spanning segment; it reads AIIMIVLVSVFFALGCISVYM. The RING-type; atypical zinc-finger motif lies at 118–160; that stretch reads CPVCLNEFEDDETLRLIPQCCHVFHPGCIDAWLRSQTTCPLCR.

It belongs to the RING-type zinc finger family. ATL subfamily.

It localises to the membrane. It carries out the reaction S-ubiquitinyl-[E2 ubiquitin-conjugating enzyme]-L-cysteine + [acceptor protein]-L-lysine = [E2 ubiquitin-conjugating enzyme]-L-cysteine + N(6)-ubiquitinyl-[acceptor protein]-L-lysine.. Its pathway is protein modification; protein ubiquitination. In terms of biological role, E3 ubiquitin-protein ligase able to catalyze polyubiquitination with ubiquitin-conjugating enzyme E2 UBC8, UBC10, UBC11, UBC28 and UBC29 in vitro. The sequence is that of E3 ubiquitin-protein ligase ATL15 (ATL15) from Arabidopsis thaliana (Mouse-ear cress).